The primary structure comprises 406 residues: RNA exonuclease 4 (406 aa).

Polar residues predominate over residues 1–10 (MAPELSSNWK). Disordered stretches follow at residues 1-108 (MAPE…TLPS) and 156-181 (AGLT…PTDL). Low complexity-rich tracts occupy residues 54-64 (SQQQQQASNPS), 72-82 (SQTQSQPSSQK), and 94-108 (SKPT…TLPS). Over residues 162-173 (GHSSSSPKSNKN) the composition is skewed to polar residues. One can recognise an Exonuclease domain in the interval 216-367 (YLSIDCEMVG…EDARVAMLLF (152 aa)). A compositionally biased stretch (basic and acidic residues) spans 377–387 (ENSNRYEEGQA). Residues 377-406 (ENSNRYEEGQAKKGGNGGGGGGGKKKKGKK) are disordered. Positions 388–398 (KKGGNGGGGGG) are enriched in gly residues.

It belongs to the REXO4 family.

It localises to the nucleus. Its function is as follows. Exoribonuclease involved in ribosome biosynthesis. Involved in the processing of ITS1, the internal transcribed spacer localized between the 18S and 5.8S rRNAs. This Neurospora crassa (strain ATCC 24698 / 74-OR23-1A / CBS 708.71 / DSM 1257 / FGSC 987) protein is RNA exonuclease 4 (rex-4).